We begin with the raw amino-acid sequence, 149 residues long: Arginine regulator (149 aa).

The protein belongs to the ArgR family.

Its subcellular location is the cytoplasm. The protein operates within amino-acid degradation; L-arginine degradation via ADI pathway. In terms of biological role, regulates the transcription of the arc operon, involved in arginine catabolism. In Bacillus thuringiensis subsp. konkukian (strain 97-27), this protein is Arginine regulator (argR1).